The primary structure comprises 545 residues: Ribulokinase (545 aa).

The protein belongs to the ribulokinase family.

The enzyme catalyses D-ribulose + ATP = D-ribulose 5-phosphate + ADP + H(+). The catalysed reaction is L-ribulose + ATP = L-ribulose 5-phosphate + ADP + H(+). The protein operates within carbohydrate degradation; L-arabinose degradation via L-ribulose; D-xylulose 5-phosphate from L-arabinose (bacterial route): step 2/3. The polypeptide is Ribulokinase (Staphylococcus aureus (strain MSSA476)).